Reading from the N-terminus, the 339-residue chain is Extracellular matrix protein-binding protein emp (339 aa).

Positions 1-26 (MKKKLFVLTMSTLFATQLINSNHANA) are cleaved as a signal peptide.

It is found in the cell surface. Functionally, adhesin that binds to the host cell extracellular matrix proteins fibronectin, fibrinogen, collagen, and vitronectin. This chain is Extracellular matrix protein-binding protein emp (emp), found in Staphylococcus aureus (strain bovine RF122 / ET3-1).